The chain runs to 204 residues: Inactive ribonuclease-like protein 9 (204 aa).

Residues 1 to 26 form the signal peptide; that stretch reads MMRTLITTHPLLLLLLLQQLLQPVQL. Intrachain disulfides connect C97–C152, C115–C167, and C122–C129. 2 N-linked (GlcNAc...) asparagine glycosylation sites follow: N130 and N142.

Belongs to the pancreatic ribonuclease family.

The protein resides in the secreted. In terms of biological role, does not exhibit any ribonuclease activity. The chain is Inactive ribonuclease-like protein 9 (RNASE9) from Chlorocebus aethiops (Green monkey).